Consider the following 82-residue polypeptide: Kappa-actitoxin-Avd4j (82 aa).

Positions 1–19 are cleaved as a signal peptide; sequence MNKALFLCLVVLCAAVVFA. The propeptide occupies 20–31; sequence AEDLQKAKHAPF. 3 disulfide bridges follow: cysteine 38-cysteine 73, cysteine 40-cysteine 66, and cysteine 56-cysteine 74.

It belongs to the sea anemone type 3 (BDS) potassium channel toxin family. As to expression, weakly expressed in the ectodermal tissue from the distal and proximal tentacles, body wall, and oral disk.

It is found in the secreted. Its subcellular location is the nematocyst. Its function is as follows. Blocks Kv3 voltage-gated potassium channels. Reduces blood pressure. This is Kappa-actitoxin-Avd4j from Anemonia viridis (Snakelocks anemone).